We begin with the raw amino-acid sequence, 187 residues long: Adenylate kinase (187 aa).

12 to 17 is a binding site for ATP; the sequence is GAGKGT. The tract at residues 32–61 is NMP; the sequence is STGDIFRANLAENTELGQKARQFMDAGDLV. AMP is bound by residues T33, R38, 59 to 61, 87 to 90, and Q94; these read DLV and GYPR. The LID stretch occupies residues 128–134; that stretch reads GRGRADD. ATP is bound at residue R129. Residues R131 and R142 each coordinate AMP. Residue R170 participates in ATP binding.

The protein belongs to the adenylate kinase family. As to quaternary structure, monomer.

Its subcellular location is the cytoplasm. It catalyses the reaction AMP + ATP = 2 ADP. The protein operates within purine metabolism; AMP biosynthesis via salvage pathway; AMP from ADP: step 1/1. Its function is as follows. Catalyzes the reversible transfer of the terminal phosphate group between ATP and AMP. Plays an important role in cellular energy homeostasis and in adenine nucleotide metabolism. The polypeptide is Adenylate kinase (Leuconostoc mesenteroides subsp. mesenteroides (strain ATCC 8293 / DSM 20343 / BCRC 11652 / CCM 1803 / JCM 6124 / NCDO 523 / NBRC 100496 / NCIMB 8023 / NCTC 12954 / NRRL B-1118 / 37Y)).